A 144-amino-acid polypeptide reads, in one-letter code: Ribonuclease H (144 aa).

One can recognise an RNase H type-1 domain in the interval 1–141; that stretch reads MKKVEIFTDG…ADRLASEAAD (141 aa). The Mg(2+) site is built by Asp9, Glu47, Asp69, and Asp133.

This sequence belongs to the RNase H family. As to quaternary structure, monomer. Mg(2+) serves as cofactor.

It is found in the cytoplasm. The catalysed reaction is Endonucleolytic cleavage to 5'-phosphomonoester.. Endonuclease that specifically degrades the RNA of RNA-DNA hybrids. In Erythrobacter litoralis (strain HTCC2594), this protein is Ribonuclease H.